Reading from the N-terminus, the 102-residue chain is Iron-sulfur cluster assembly protein CyaY (102 aa).

It belongs to the frataxin family.

Involved in iron-sulfur (Fe-S) cluster assembly. May act as a regulator of Fe-S biogenesis. The protein is Iron-sulfur cluster assembly protein CyaY of Histophilus somni (strain 2336) (Haemophilus somnus).